Consider the following 302-residue polypeptide: ATP synthase subunit b 1 (302 aa).

The chain crosses the membrane as a helical span at residues 5 to 22 (WFTVIAQGINFLLLLWLL). The interval 278–302 (GLPENEGTDNPEANPPHAEAKIPHA) is disordered.

Belongs to the ATPase B chain family. As to quaternary structure, F-type ATPases have 2 components, F(1) - the catalytic core - and F(0) - the membrane proton channel. F(1) has five subunits: alpha(3), beta(3), gamma(1), delta(1), epsilon(1). F(0) has three main subunits: a(1), b(2) and c(10-14). The alpha and beta chains form an alternating ring which encloses part of the gamma chain. F(1) is attached to F(0) by a central stalk formed by the gamma and epsilon chains, while a peripheral stalk is formed by the delta and b chains.

It localises to the cell inner membrane. F(1)F(0) ATP synthase produces ATP from ADP in the presence of a proton or sodium gradient. F-type ATPases consist of two structural domains, F(1) containing the extramembraneous catalytic core and F(0) containing the membrane proton channel, linked together by a central stalk and a peripheral stalk. During catalysis, ATP synthesis in the catalytic domain of F(1) is coupled via a rotary mechanism of the central stalk subunits to proton translocation. In terms of biological role, component of the F(0) channel, it forms part of the peripheral stalk, linking F(1) to F(0). This is ATP synthase subunit b 1 from Pseudoalteromonas atlantica (strain T6c / ATCC BAA-1087).